Here is a 397-residue protein sequence, read N- to C-terminus: Succinyl-diaminopimelate desuccinylase (397 aa).

Residue H73 participates in Zn(2+) binding. The active site involves D75. D106 is a binding site for Zn(2+). E140 functions as the Proton acceptor in the catalytic mechanism. Residues E141, E169, and H366 each coordinate Zn(2+).

It belongs to the peptidase M20A family. DapE subfamily. As to quaternary structure, homodimer. Zn(2+) is required as a cofactor. Co(2+) serves as cofactor.

It catalyses the reaction N-succinyl-(2S,6S)-2,6-diaminopimelate + H2O = (2S,6S)-2,6-diaminopimelate + succinate. It functions in the pathway amino-acid biosynthesis; L-lysine biosynthesis via DAP pathway; LL-2,6-diaminopimelate from (S)-tetrahydrodipicolinate (succinylase route): step 3/3. Catalyzes the hydrolysis of N-succinyl-L,L-diaminopimelic acid (SDAP), forming succinate and LL-2,6-diaminopimelate (DAP), an intermediate involved in the bacterial biosynthesis of lysine and meso-diaminopimelic acid, an essential component of bacterial cell walls. This Rhizobium meliloti (strain 1021) (Ensifer meliloti) protein is Succinyl-diaminopimelate desuccinylase.